The chain runs to 87 residues: Putative outer membrane protein ArbH (87 aa).

The signal sequence occupies residues 1–23; the sequence is MKIKNSYLVIASLLYPISFISTA.

It belongs to the porin LamB (TC 1.B.3) family.

The protein resides in the cell outer membrane. May be a sugar porin with a broad carbohydrate specificity. This Dickeya chrysanthemi (Pectobacterium chrysanthemi) protein is Putative outer membrane protein ArbH (arbH).